Consider the following 610-residue polypeptide: tRNA uridine 5-carboxymethylaminomethyl modification enzyme MnmG (610 aa).

Position 14–19 (14–19 (GAGHAG)) interacts with FAD. Residue 274–288 (GPRYCPSIEDKIVKF) participates in NAD(+) binding.

It belongs to the MnmG family. As to quaternary structure, homodimer. Heterotetramer of two MnmE and two MnmG subunits. The cofactor is FAD.

It localises to the cytoplasm. In terms of biological role, NAD-binding protein involved in the addition of a carboxymethylaminomethyl (cmnm) group at the wobble position (U34) of certain tRNAs, forming tRNA-cmnm(5)s(2)U34. This is tRNA uridine 5-carboxymethylaminomethyl modification enzyme MnmG from Chlamydia muridarum (strain MoPn / Nigg).